Here is a 152-residue protein sequence, read N- to C-terminus: Small ribosomal subunit protein uS11A (152 aa).

Residues 131–152 form a disordered region; sequence EDVTPIPSDSTRRKGGRRGRRL. A compositionally biased stretch (basic residues) spans 143-152; sequence RKGGRRGRRL.

The protein belongs to the universal ribosomal protein uS11 family.

The polypeptide is Small ribosomal subunit protein uS11A (Anopheles gambiae (African malaria mosquito)).